The following is a 171-amino-acid chain: ATP synthase subunit b (171 aa).

A helical membrane pass occupies residues 26-48 (LINLAIIIGLLVYAGRGFLGNLL).

This sequence belongs to the ATPase B chain family. F-type ATPases have 2 components, F(1) - the catalytic core - and F(0) - the membrane proton channel. F(1) has five subunits: alpha(3), beta(3), gamma(1), delta(1), epsilon(1). F(0) has four main subunits: a(1), b(1), b'(1) and c(10-14). The alpha and beta chains form an alternating ring which encloses part of the gamma chain. F(1) is attached to F(0) by a central stalk formed by the gamma and epsilon chains, while a peripheral stalk is formed by the delta, b and b' chains.

Its subcellular location is the cellular thylakoid membrane. Its function is as follows. F(1)F(0) ATP synthase produces ATP from ADP in the presence of a proton or sodium gradient. F-type ATPases consist of two structural domains, F(1) containing the extramembraneous catalytic core and F(0) containing the membrane proton channel, linked together by a central stalk and a peripheral stalk. During catalysis, ATP synthesis in the catalytic domain of F(1) is coupled via a rotary mechanism of the central stalk subunits to proton translocation. In terms of biological role, component of the F(0) channel, it forms part of the peripheral stalk, linking F(1) to F(0). The chain is ATP synthase subunit b from Synechococcus elongatus (strain ATCC 33912 / PCC 7942 / FACHB-805) (Anacystis nidulans R2).